A 452-amino-acid chain; its full sequence is MLNPYEIMETIRMIEEEKLDIRTITMGISLRDCAHPSGEVARKNIYDKILRYAGNLVEVARDIELEYGIPIINKRIAVTPISLVAESSSEEDFIKFAETLDKAAGEVGVDFIGGFSALVHKGFTTGDKKLINSIPRALANTERVCSSINVATTRAGINMEAVSRMGKIIKKTARETRDKGGLGCAKLVVFANVPEDNPFMAGAFHGIGEPECVINVGISGPGAVKAALKKVKGQKFDTVAETIKKTAFKITRAGQLVAREASKRLNVPFGIVDLSLAPTPAVGDSVAEILEEMGLESCGAPGTTAALALLNDAVKKGGTMASSHVGGLSGAFIPVSEDAGMIKAVKRGSLNLEKLEAMTCVCSVGLDMIAVPGSTKADTISAVIADEVAIGVINNKTTAVRIIPVPGKDVGDEVEFGGLLGTAPVMDVSKFSSSAFIGRGGRIPAPIHSLKN.

This sequence belongs to the UPF0210 family. As to quaternary structure, homodimer.

This chain is UPF0210 protein Hore_14430, found in Halothermothrix orenii (strain H 168 / OCM 544 / DSM 9562).